A 62-amino-acid polypeptide reads, in one-letter code: KEGYAMDHEGCKFSCFIRPAGFCDGYCKTHLKASSGYCAWPACYCYGVPDHIKVWDYATNKC.

One can recognise an LCN-type CS-alpha/beta domain in the interval 1–62 (KEGYAMDHEG…KVWDYATNKC (62 aa)). 4 disulfides stabilise this stretch: C11–C62, C15–C38, C23–C43, and C27–C45. C62 is modified (cysteine amide).

Expressed by the venom gland.

The protein resides in the secreted. In terms of biological role, alpha toxins bind voltage-independently at site-3 of sodium channels (Nav) and inhibit the inactivation of the activated channels, thereby blocking neuronal transmission. Is toxic to mice. This is Toxin Tst2 from Tityus stigmurus (Brazilian scorpion).